The sequence spans 550 residues: Beta-cubebene synthase (550 aa).

The Mg(2+) site is built by Asp-303, Asp-307, Asp-447, and Glu-455. The DDXXD motif motif lies at 303 to 307; that stretch reads DDTYD.

This sequence belongs to the terpene synthase family. Tpsa subfamily. The cofactor is Mg(2+). Expressed in young developing leaves and in stamens. Not detected in tepals and carpels.

It carries out the reaction (2E,6E)-farnesyl diphosphate = beta-cubebene + diphosphate. It functions in the pathway secondary metabolite biosynthesis; terpenoid biosynthesis. Functionally, sesquiterpene synthase converting farnesyl diphosphate into beta-cubebene (24.5%), alpha-muurolene (19.3%), delta-cadinol (18.6%), delta-elemene (16.0%), tau-muurolene (10.8%), and beta-elemene (10.8%). No activity with geranyl diphosphate or geranylgeranyl diphosphate. This Magnolia grandiflora (Southern magnolia) protein is Beta-cubebene synthase.